We begin with the raw amino-acid sequence, 471 residues long: Glutamate--tRNA ligase 1 (471 aa).

The short motif at 15-25 (PSPTGYLHIGG) is the 'HIGH' region element. A 'KMSKS' region motif is present at residues 243–247 (KLSKR). Residue K246 participates in ATP binding.

Belongs to the class-I aminoacyl-tRNA synthetase family. Glutamate--tRNA ligase type 1 subfamily. Monomer.

It localises to the cytoplasm. It catalyses the reaction tRNA(Glu) + L-glutamate + ATP = L-glutamyl-tRNA(Glu) + AMP + diphosphate. In terms of biological role, catalyzes the attachment of glutamate to tRNA(Glu) in a two-step reaction: glutamate is first activated by ATP to form Glu-AMP and then transferred to the acceptor end of tRNA(Glu). The polypeptide is Glutamate--tRNA ligase 1 (Cereibacter sphaeroides (strain ATCC 17023 / DSM 158 / JCM 6121 / CCUG 31486 / LMG 2827 / NBRC 12203 / NCIMB 8253 / ATH 2.4.1.) (Rhodobacter sphaeroides)).